Consider the following 130-residue polypeptide: Small ribosomal subunit protein uS8 (130 aa).

The protein belongs to the universal ribosomal protein uS8 family. In terms of assembly, part of the 30S ribosomal subunit. Contacts proteins S5 and S12.

Functionally, one of the primary rRNA binding proteins, it binds directly to 16S rRNA central domain where it helps coordinate assembly of the platform of the 30S subunit. The polypeptide is Small ribosomal subunit protein uS8 (Enterobacter sp. (strain 638)).